A 447-amino-acid polypeptide reads, in one-letter code: 23S rRNA (uracil(1939)-C(5))-methyltransferase RlmD (447 aa).

A TRAM domain is found at 7–66 (RKPLSQEPQKASIEALTHEGRGIAHVAGKTVFIDGALPGETVWFHYLRRRGKFDEGRVLE). [4Fe-4S] cluster-binding residues include Cys-79, Cys-85, Cys-88, and Cys-168. Positions 275, 304, 309, 325, 352, and 374 each coordinate S-adenosyl-L-methionine. Catalysis depends on Cys-400, which acts as the Nucleophile.

Belongs to the class I-like SAM-binding methyltransferase superfamily. RNA M5U methyltransferase family. RlmD subfamily.

The catalysed reaction is uridine(1939) in 23S rRNA + S-adenosyl-L-methionine = 5-methyluridine(1939) in 23S rRNA + S-adenosyl-L-homocysteine + H(+). In terms of biological role, catalyzes the formation of 5-methyl-uridine at position 1939 (m5U1939) in 23S rRNA. In Nitrosococcus oceani (strain ATCC 19707 / BCRC 17464 / JCM 30415 / NCIMB 11848 / C-107), this protein is 23S rRNA (uracil(1939)-C(5))-methyltransferase RlmD.